The chain runs to 474 residues: Ribulose bisphosphate carboxylase large chain (474 aa).

2 residues coordinate substrate: Asn-122 and Thr-172. Residue Lys-174 is the Proton acceptor of the active site. Lys-176 contributes to the substrate binding site. 3 residues coordinate Mg(2+): Lys-200, Asp-202, and Glu-203. Residue Lys-200 is modified to N6-carboxylysine. His-293 serves as the catalytic Proton acceptor. Residues Arg-294, His-326, and Ser-378 each contribute to the substrate site.

This sequence belongs to the RuBisCO large chain family. Type I subfamily. Heterohexadecamer of 8 large chains and 8 small chains; disulfide-linked. The disulfide link is formed within the large subunit homodimers. Mg(2+) serves as cofactor. Post-translationally, the disulfide bond which can form in the large chain dimeric partners within the hexadecamer appears to be associated with oxidative stress and protein turnover.

The protein resides in the carboxysome. The catalysed reaction is 2 (2R)-3-phosphoglycerate + 2 H(+) = D-ribulose 1,5-bisphosphate + CO2 + H2O. It carries out the reaction D-ribulose 1,5-bisphosphate + O2 = 2-phosphoglycolate + (2R)-3-phosphoglycerate + 2 H(+). In terms of biological role, ruBisCO catalyzes two reactions: the carboxylation of D-ribulose 1,5-bisphosphate, the primary event in carbon dioxide fixation, as well as the oxidative fragmentation of the pentose substrate in the photorespiration process. Both reactions occur simultaneously and in competition at the same active site. The chain is Ribulose bisphosphate carboxylase large chain from Gloeobacter violaceus (strain ATCC 29082 / PCC 7421).